A 183-amino-acid polypeptide reads, in one-letter code: Extracellular superoxide dismutase [Cu-Zn] (183 aa).

Positions 1–32 (MTMLQQILLISVIIGTVHVHEVDCANEVLKAR) are cleaved as a signal peptide. Asn63 carries an N-linked (GlcNAc...) asparagine glycan. The Cu cation site is built by His77, His79, and His94. Cysteines 88 and 177 form a disulfide. Positions 94, 102, 111, and 114 each coordinate Zn(2+). A Cu cation-binding site is contributed by His151.

Belongs to the Cu-Zn superoxide dismutase family. It depends on Cu cation as a cofactor. Zn(2+) is required as a cofactor.

It is found in the secreted. The protein resides in the extracellular space. It catalyses the reaction 2 superoxide + 2 H(+) = H2O2 + O2. Functionally, destroys radicals which are normally produced within the cells and which are toxic to biological systems. The polypeptide is Extracellular superoxide dismutase [Cu-Zn] (SOD) (Haemonchus contortus (Barber pole worm)).